A 100-amino-acid polypeptide reads, in one-letter code: Aspartyl/glutamyl-tRNA(Asn/Gln) amidotransferase subunit C (100 aa).

Belongs to the GatC family. As to quaternary structure, heterotrimer of A, B and C subunits.

The enzyme catalyses L-glutamyl-tRNA(Gln) + L-glutamine + ATP + H2O = L-glutaminyl-tRNA(Gln) + L-glutamate + ADP + phosphate + H(+). The catalysed reaction is L-aspartyl-tRNA(Asn) + L-glutamine + ATP + H2O = L-asparaginyl-tRNA(Asn) + L-glutamate + ADP + phosphate + 2 H(+). Functionally, allows the formation of correctly charged Asn-tRNA(Asn) or Gln-tRNA(Gln) through the transamidation of misacylated Asp-tRNA(Asn) or Glu-tRNA(Gln) in organisms which lack either or both of asparaginyl-tRNA or glutaminyl-tRNA synthetases. The reaction takes place in the presence of glutamine and ATP through an activated phospho-Asp-tRNA(Asn) or phospho-Glu-tRNA(Gln). The chain is Aspartyl/glutamyl-tRNA(Asn/Gln) amidotransferase subunit C from Rickettsia felis (strain ATCC VR-1525 / URRWXCal2) (Rickettsia azadi).